Reading from the N-terminus, the 113-residue chain is Nucleoid-associated protein THA_1374 (113 aa).

This sequence belongs to the YbaB/EbfC family. Homodimer.

The protein localises to the cytoplasm. It is found in the nucleoid. Binds to DNA and alters its conformation. May be involved in regulation of gene expression, nucleoid organization and DNA protection. The protein is Nucleoid-associated protein THA_1374 of Thermosipho africanus (strain TCF52B).